A 488-amino-acid chain; its full sequence is Probable cytosol aminopeptidase (488 aa).

2 residues coordinate Mn(2+): K251 and D256. K263 is a catalytic residue. D274, D333, and E335 together coordinate Mn(2+). R337 is an active-site residue.

It belongs to the peptidase M17 family. Mn(2+) serves as cofactor.

It localises to the cytoplasm. The catalysed reaction is Release of an N-terminal amino acid, Xaa-|-Yaa-, in which Xaa is preferably Leu, but may be other amino acids including Pro although not Arg or Lys, and Yaa may be Pro. Amino acid amides and methyl esters are also readily hydrolyzed, but rates on arylamides are exceedingly low.. It carries out the reaction Release of an N-terminal amino acid, preferentially leucine, but not glutamic or aspartic acids.. Its function is as follows. Presumably involved in the processing and regular turnover of intracellular proteins. Catalyzes the removal of unsubstituted N-terminal amino acids from various peptides. The chain is Probable cytosol aminopeptidase from Cenarchaeum symbiosum (strain A).